A 377-amino-acid chain; its full sequence is Chaperone protein DnaJ (377 aa).

In terms of domain architecture, J spans 5-70 (DYYEILGVSK…QKRAAYDQYG (66 aa)). Residues 132–210 (GVTKEIRIPT…CHGHGRVEKT (79 aa)) form a CR-type zinc finger. Zn(2+) is bound by residues cysteine 145, cysteine 148, cysteine 162, cysteine 165, cysteine 184, cysteine 187, cysteine 198, and cysteine 201. CXXCXGXG motif repeat units follow at residues 145 to 152 (CDVCHGSG), 162 to 169 (CPTCHGAG), 184 to 191 (CPHCQGRG), and 198 to 205 (CNKCHGHG).

The protein belongs to the DnaJ family. As to quaternary structure, homodimer. Requires Zn(2+) as cofactor.

It localises to the cytoplasm. Participates actively in the response to hyperosmotic and heat shock by preventing the aggregation of stress-denatured proteins and by disaggregating proteins, also in an autonomous, DnaK-independent fashion. Unfolded proteins bind initially to DnaJ; upon interaction with the DnaJ-bound protein, DnaK hydrolyzes its bound ATP, resulting in the formation of a stable complex. GrpE releases ADP from DnaK; ATP binding to DnaK triggers the release of the substrate protein, thus completing the reaction cycle. Several rounds of ATP-dependent interactions between DnaJ, DnaK and GrpE are required for fully efficient folding. Also involved, together with DnaK and GrpE, in the DNA replication of plasmids through activation of initiation proteins. This chain is Chaperone protein DnaJ, found in Klebsiella pneumoniae subsp. pneumoniae (strain ATCC 700721 / MGH 78578).